A 205-amino-acid chain; its full sequence is uncharacterized protein (205 aa).

This is an uncharacterized protein from Picosynechococcus sp. (strain ATCC 27264 / PCC 7002 / PR-6) (Agmenellum quadruplicatum).